A 501-amino-acid chain; its full sequence is Proline--tRNA ligase (501 aa).

This sequence belongs to the class-II aminoacyl-tRNA synthetase family.

The enzyme catalyses tRNA(Pro) + L-proline + ATP = L-prolyl-tRNA(Pro) + AMP + diphosphate. The polypeptide is Proline--tRNA ligase (Encephalitozoon cuniculi (strain GB-M1) (Microsporidian parasite)).